A 312-amino-acid chain; its full sequence is Acetylglutamate kinase (312 aa).

Substrate-binding positions include 77–78 (GG), Arg-99, and Asn-192.

It belongs to the acetylglutamate kinase family. ArgB subfamily.

It is found in the cytoplasm. It catalyses the reaction N-acetyl-L-glutamate + ATP = N-acetyl-L-glutamyl 5-phosphate + ADP. Its pathway is amino-acid biosynthesis; L-arginine biosynthesis; N(2)-acetyl-L-ornithine from L-glutamate: step 2/4. Catalyzes the ATP-dependent phosphorylation of N-acetyl-L-glutamate. The polypeptide is Acetylglutamate kinase (Synechococcus sp. (strain JA-2-3B'a(2-13)) (Cyanobacteria bacterium Yellowstone B-Prime)).